A 284-amino-acid polypeptide reads, in one-letter code: Shikimate dehydrogenase (NADP(+)) (284 aa).

Shikimate is bound by residues Ser-23–Ser-25 and Thr-70. Residue Lys-74 is the Proton acceptor of the active site. Glu-86 serves as a coordination point for NADP(+). Asn-95 and Asp-111 together coordinate shikimate. Residues Gly-135–Ala-139, Asn-159–Arg-164, and Ala-227 contribute to the NADP(+) site. A shikimate-binding site is contributed by Tyr-229. Residue Gly-251 participates in NADP(+) binding.

It belongs to the shikimate dehydrogenase family. In terms of assembly, homodimer.

The enzyme catalyses shikimate + NADP(+) = 3-dehydroshikimate + NADPH + H(+). Its pathway is metabolic intermediate biosynthesis; chorismate biosynthesis; chorismate from D-erythrose 4-phosphate and phosphoenolpyruvate: step 4/7. In terms of biological role, involved in the biosynthesis of the chorismate, which leads to the biosynthesis of aromatic amino acids. Catalyzes the reversible NADPH linked reduction of 3-dehydroshikimate (DHSA) to yield shikimate (SA). This is Shikimate dehydrogenase (NADP(+)) from Rubrobacter xylanophilus (strain DSM 9941 / JCM 11954 / NBRC 16129 / PRD-1).